The chain runs to 420 residues: Glucose-1-phosphate adenylyltransferase (420 aa).

Alpha-D-glucose 1-phosphate contacts are provided by residues Tyr-107, Gly-172, 187–188, and Ser-205; that span reads EK.

Belongs to the bacterial/plant glucose-1-phosphate adenylyltransferase family. As to quaternary structure, homotetramer.

The catalysed reaction is alpha-D-glucose 1-phosphate + ATP + H(+) = ADP-alpha-D-glucose + diphosphate. It participates in glycan biosynthesis; glycogen biosynthesis. In terms of biological role, involved in the biosynthesis of ADP-glucose, a building block required for the elongation reactions to produce glycogen. Catalyzes the reaction between ATP and alpha-D-glucose 1-phosphate (G1P) to produce pyrophosphate and ADP-Glc. This is Glucose-1-phosphate adenylyltransferase from Rhizobium rhizogenes (strain K84 / ATCC BAA-868) (Agrobacterium radiobacter).